The primary structure comprises 355 residues: IGF-like family receptor 1 (355 aa).

The N-terminal stretch at 1–22 (MGPGRCLLTALLLLALAPPPEA) is a signal peptide. Residues 23–163 (SQYCGRLEYW…PQQAWPNFLP (141 aa)) lie on the Extracellular side of the membrane. The tract at residues 120-147 (KGHCPLTPGNPGAPSSQERSSPASSIAW) is disordered. The segment covering 132 to 144 (APSSQERSSPASS) has biased composition (low complexity). A helical transmembrane segment spans residues 164–184 (LVVLVLLLTLAVIAILLFILL). Over 185 to 355 (WHLCWPKEKA…KLGSSGVCWA (171 aa)) the chain is Cytoplasmic.

The protein resides in the cell membrane. Its function is as follows. Probable cell membrane receptor for the IGF-like family proteins. Binds IGFL1 and IGFL3 with a higher affinity. May also bind IGFL2. The protein is IGF-like family receptor 1 (IGFLR1) of Homo sapiens (Human).